The following is a 542-amino-acid chain: GMP synthase [glutamine-hydrolyzing] (542 aa).

Residues 28 to 218 (IIVILDFGSQ…VYHICHCEPT (191 aa)) form the Glutamine amidotransferase type-1 domain. The Nucleophile role is filled by Cys105. Catalysis depends on residues His192 and Glu194. The GMPS ATP-PPase domain occupies 219–417 (WTTAAFIEES…IGLPEEIVRR (199 aa)). 246-252 (SGGVDSS) is a binding site for ATP.

In terms of assembly, homodimer.

The enzyme catalyses XMP + L-glutamine + ATP + H2O = GMP + L-glutamate + AMP + diphosphate + 2 H(+). It functions in the pathway purine metabolism; GMP biosynthesis; GMP from XMP (L-Gln route): step 1/1. Functionally, catalyzes the synthesis of GMP from XMP. The sequence is that of GMP synthase [glutamine-hydrolyzing] (guaA) from Synechocystis sp. (strain ATCC 27184 / PCC 6803 / Kazusa).